The primary structure comprises 716 residues: DNA ligase (716 aa).

NAD(+) contacts are provided by residues 49-53, 98-99, and Glu-132; these read DAAYD and SL. The N6-AMP-lysine intermediate role is filled by Lys-134. NAD(+) contacts are provided by Arg-155, Glu-192, Lys-308, and Lys-332. Zn(2+) is bound by residues Cys-437, Cys-439, Cys-461, and Cys-467. The region spanning 638–716 is the BRCT domain; it reads KRNSPIATKT…EDEWLQLIGE (79 aa).

The protein belongs to the NAD-dependent DNA ligase family. LigA subfamily. The cofactor is Mg(2+). Mn(2+) is required as a cofactor.

It carries out the reaction NAD(+) + (deoxyribonucleotide)n-3'-hydroxyl + 5'-phospho-(deoxyribonucleotide)m = (deoxyribonucleotide)n+m + AMP + beta-nicotinamide D-nucleotide.. Its function is as follows. DNA ligase that catalyzes the formation of phosphodiester linkages between 5'-phosphoryl and 3'-hydroxyl groups in double-stranded DNA using NAD as a coenzyme and as the energy source for the reaction. It is essential for DNA replication and repair of damaged DNA. In Bradyrhizobium sp. (strain ORS 278), this protein is DNA ligase.